We begin with the raw amino-acid sequence, 167 residues long: Small ribosomal subunit protein uS7c (167 aa).

It belongs to the universal ribosomal protein uS7 family. As to quaternary structure, part of the 30S ribosomal subunit.

Its subcellular location is the plastid. It localises to the chloroplast. Its function is as follows. One of the primary rRNA binding proteins, it binds directly to 16S rRNA where it nucleates assembly of the head domain of the 30S subunit. This chain is Small ribosomal subunit protein uS7c (rps7), found in Tetradesmus obliquus (Green alga).